The primary structure comprises 501 residues: Ell-associated factor Eaf (501 aa).

2 stretches are compositionally biased toward polar residues: residues 138–149 (NMGQGQLHSQGA) and 173–192 (ENST…SRRN). 2 disordered regions span residues 138 to 226 (NMGQ…PAWD) and 256 to 501 (GHAN…DDDD). 2 stretches are compositionally biased toward low complexity: residues 200 to 221 (RNSP…SPQS) and 256 to 270 (GHAN…SATG). Residue Ser202 is modified to Phosphoserine. A compositionally biased stretch (polar residues) spans 271-283 (QTDFGSISSSSHI). 2 stretches are compositionally biased toward low complexity: residues 302 to 314 (QRQS…QQQP) and 329 to 343 (QQQR…QRPP). Over residues 393–408 (DSSDSDSGSDSDDSTE) the composition is skewed to acidic residues. 3 stretches are compositionally biased toward low complexity: residues 416 to 437 (QQPV…HLNQ), 455 to 471 (QQQQ…QKQQ), and 483 to 501 (NDLL…DDDD).

Belongs to the EAF family.

The protein localises to the nucleus. In terms of biological role, promotes transcriptional elongation by Su(Tpl)/ELL. Essential for development. This Drosophila yakuba (Fruit fly) protein is Ell-associated factor Eaf.